The primary structure comprises 493 residues: EGF-containing fibulin-like extracellular matrix protein 1 (493 aa).

An N-terminal signal peptide occupies residues 1-17; sequence MLQTLFLTMLTLALVKS. One can recognise an EGF-like 1; atypical domain in the interval 26–71; the sequence is YTQCTDGYEWDPIRQQCKDIDECDIVPDACKGGMKCVNHYGGYLCL. Residues 173–213 enclose the EGF-like 2; calcium-binding domain; that stretch reads DIDECTSGTHNCRTDQVCINLRGSFTCQCLPGYQKRGEQCV. Cystine bridges form between Cys177-Cys190, Cys184-Cys199, Cys201-Cys212, Cys218-Cys228, Cys224-Cys237, Cys239-Cys252, Cys258-Cys268, Cys264-Cys277, Cys279-Cys292, Cys298-Cys309, Cys305-Cys318, Cys320-Cys332, Cys338-Cys350, Cys344-Cys359, and Cys365-Cys377. In terms of domain architecture, EGF-like 3; calcium-binding spans 214-253; sequence DIDECTVPPYCHQRCVNTPGSFYCQCSPGFQLAANNYTCV. Asn249 carries N-linked (GlcNAc...) asparagine glycosylation. The EGF-like 4; calcium-binding domain maps to 254–293; it reads DINECDASNQCAQQCYNILGSFICQCNQGYELSSDRLNCE. Residues 259 to 493 form a mediates interaction with TIMP3 region; that stretch reads DASNQCAQQC…LTIIVGPFSF (235 aa). One can recognise an EGF-like 5; calcium-binding domain in the interval 294–333; the sequence is DIDECRTSSYLCQYQCVNEPGKFSCMCPQGYEVVRSRTCQ. One can recognise an EGF-like 6; calcium-binding domain in the interval 334-378; that stretch reads DINECETTNECREDEMCWNYHGGFRCYPRNPCQDHYVLTSENRCV.

It belongs to the fibulin family. As to quaternary structure, interacts with ECM1. Interacts with TIMP3. Expressed in the eye in the ciliary body, cornea, inner nuclear layer of the retina, and in the optic disk.

It is found in the secreted. The protein resides in the extracellular space. It localises to the extracellular matrix. In terms of biological role, binds EGFR, the EGF receptor, inducing EGFR autophosphorylation and the activation of downstream signaling pathways. May play a role in cell adhesion and migration. May function as a negative regulator of chondrocyte differentiation. In the olfactory epithelium, it may regulate glial cell migration, differentiation and the ability of glial cells to support neuronal neurite outgrowth. This chain is EGF-containing fibulin-like extracellular matrix protein 1 (Efemp1), found in Mus musculus (Mouse).